A 325-amino-acid chain; its full sequence is Holliday junction branch migration complex subunit RuvB (325 aa).

A large ATPase domain (RuvB-L) region spans residues 1-180; the sequence is MKNQLLDAKV…FGIHLKLNFY (180 aa). Residues L19, R20, G61, K64, T65, T66, 127–129, R170, Y180, and R217 contribute to the ATP site; that span reads EDF. Mg(2+) is bound at residue T65. The interval 181 to 251 is small ATPAse domain (RuvB-S); the sequence is SCEELTKIVE…ITDYALNQLG (71 aa). A head domain (RuvB-H) region spans residues 254 to 325; sequence KLGLDSSDHK…ITANALKHLH (72 aa). Positions 290, 309, and 314 each coordinate DNA.

This sequence belongs to the RuvB family. In terms of assembly, homohexamer. Forms an RuvA(8)-RuvB(12)-Holliday junction (HJ) complex. HJ DNA is sandwiched between 2 RuvA tetramers; dsDNA enters through RuvA and exits via RuvB. An RuvB hexamer assembles on each DNA strand where it exits the tetramer. Each RuvB hexamer is contacted by two RuvA subunits (via domain III) on 2 adjacent RuvB subunits; this complex drives branch migration. In the full resolvosome a probable DNA-RuvA(4)-RuvB(12)-RuvC(2) complex forms which resolves the HJ.

It is found in the cytoplasm. The enzyme catalyses ATP + H2O = ADP + phosphate + H(+). The RuvA-RuvB-RuvC complex processes Holliday junction (HJ) DNA during genetic recombination and DNA repair, while the RuvA-RuvB complex plays an important role in the rescue of blocked DNA replication forks via replication fork reversal (RFR). RuvA specifically binds to HJ cruciform DNA, conferring on it an open structure. The RuvB hexamer acts as an ATP-dependent pump, pulling dsDNA into and through the RuvAB complex. RuvB forms 2 homohexamers on either side of HJ DNA bound by 1 or 2 RuvA tetramers; 4 subunits per hexamer contact DNA at a time. Coordinated motions by a converter formed by DNA-disengaged RuvB subunits stimulates ATP hydrolysis and nucleotide exchange. Immobilization of the converter enables RuvB to convert the ATP-contained energy into a lever motion, pulling 2 nucleotides of DNA out of the RuvA tetramer per ATP hydrolyzed, thus driving DNA branch migration. The RuvB motors rotate together with the DNA substrate, which together with the progressing nucleotide cycle form the mechanistic basis for DNA recombination by continuous HJ branch migration. Branch migration allows RuvC to scan DNA until it finds its consensus sequence, where it cleaves and resolves cruciform DNA. This Orientia tsutsugamushi (strain Ikeda) (Rickettsia tsutsugamushi) protein is Holliday junction branch migration complex subunit RuvB.